We begin with the raw amino-acid sequence, 174 residues long: Shikimate kinase (174 aa).

15-20 (GTGKST) is a binding site for ATP. Residue S19 participates in Mg(2+) binding. Substrate contacts are provided by D37, R61, and G82. R120 contributes to the ATP binding site. Residue R138 participates in substrate binding.

This sequence belongs to the shikimate kinase family. As to quaternary structure, monomer. It depends on Mg(2+) as a cofactor.

The protein localises to the cytoplasm. The enzyme catalyses shikimate + ATP = 3-phosphoshikimate + ADP + H(+). Its pathway is metabolic intermediate biosynthesis; chorismate biosynthesis; chorismate from D-erythrose 4-phosphate and phosphoenolpyruvate: step 5/7. Functionally, catalyzes the specific phosphorylation of the 3-hydroxyl group of shikimic acid using ATP as a cosubstrate. The chain is Shikimate kinase from Staphylococcus aureus (strain MSSA476).